The chain runs to 356 residues: MRVLGIESSCDETGVAVFDSQLGLLGHELYSQVAVHAEYGGVVPELASRDHIRKLIPLVDDILSSTHSVGAIDAVAYTAGPGLIGALLVGSCVGRAMAYAWGVPAIGVHHMEGHLLAPLLEAEPPEFPFVALLVSGGHTQLVDVKAIGDYMLLGESLDDAAGEAFDKAAKMMDLDYPGGPQVARFAEKGQPGRFKFPRPMTDRPGLDFSFSGLKTFTLNTVNEHAQANGLPDDQTCADICHAFQEAVVDTLVIKCRRALQQTGRKTLIIAGGVSANNRLREKLEQALAKIGARVYYARHEFCTDNGAMIAFAGCQRLIAGQTADLSVDVFPRWPLESLDAIQTSHASNPRTTLDNL.

Residues His-110 and His-114 each contribute to the Fe cation site. Residues 133-137 (LVSGG), Asp-166, Gly-179, and Asn-276 contribute to the substrate site. Asp-304 provides a ligand contact to Fe cation.

The protein belongs to the KAE1 / TsaD family. Requires Fe(2+) as cofactor.

Its subcellular location is the cytoplasm. It catalyses the reaction L-threonylcarbamoyladenylate + adenosine(37) in tRNA = N(6)-L-threonylcarbamoyladenosine(37) in tRNA + AMP + H(+). Functionally, required for the formation of a threonylcarbamoyl group on adenosine at position 37 (t(6)A37) in tRNAs that read codons beginning with adenine. Is involved in the transfer of the threonylcarbamoyl moiety of threonylcarbamoyl-AMP (TC-AMP) to the N6 group of A37, together with TsaE and TsaB. TsaD likely plays a direct catalytic role in this reaction. This chain is tRNA N6-adenosine threonylcarbamoyltransferase, found in Teredinibacter turnerae (strain ATCC 39867 / T7901).